The sequence spans 397 residues: Elongation factor Tu (397 aa).

Residues 10–206 (KPHVNIGTIG…AVDESIPDPV (197 aa)) enclose the tr-type G domain. The segment at 19–26 (GHVDHGKT) is G1. Residue 19–26 (GHVDHGKT) coordinates GTP. A Mg(2+)-binding site is contributed by T26. Residues 62–66 (GITIN) form a G2 region. Residues 83 to 86 (DAPG) are G3. GTP contacts are provided by residues 83–87 (DAPGH) and 138–141 (NKSD). The segment at 138-141 (NKSD) is G4. Residues 176–178 (SAL) form a G5 region.

This sequence belongs to the TRAFAC class translation factor GTPase superfamily. Classic translation factor GTPase family. EF-Tu/EF-1A subfamily. In terms of assembly, monomer.

The protein resides in the cytoplasm. It carries out the reaction GTP + H2O = GDP + phosphate + H(+). GTP hydrolase that promotes the GTP-dependent binding of aminoacyl-tRNA to the A-site of ribosomes during protein biosynthesis. This chain is Elongation factor Tu, found in Mycobacteroides abscessus (strain ATCC 19977 / DSM 44196 / CCUG 20993 / CIP 104536 / JCM 13569 / NCTC 13031 / TMC 1543 / L948) (Mycobacterium abscessus).